We begin with the raw amino-acid sequence, 646 residues long: Sulfate transporter 3.2 (646 aa).

The Cytoplasmic portion of the chain corresponds to 1 to 76; sequence MSSKRASQYH…GYSLEYLKSD (76 aa). A helical transmembrane segment spans residues 77–97; it reads VISGITIASLAIPQGISYAQL. At 98-99 the chain is on the extracellular side; sequence AN. Residues 100–120 traverse the membrane as a helical segment; it reads LPPILGLYSSLVPPLVYAIMG. The Cytoplasmic portion of the chain corresponds to 121–124; that stretch reads SSRD. A helical membrane pass occupies residues 125–145; that stretch reads LAVGTVAVASLLTAAMLGKEV. Topologically, residues 146 to 154 are extracellular; sequence NAVVNPKLY. Residues 155 to 175 traverse the membrane as a helical segment; the sequence is LHLAFTATFFAGLMQTCLGLL. Arginine 176 is a topological domain (cytoplasmic). The helical transmembrane segment at 177 to 197 threads the bilayer; sequence LGFVVEILSHAAIVGFMGGAA. Topologically, residues 198 to 235 are extracellular; the sequence is TVVCLQQLKGLLGLHHFTHSTDIVTVLRSIFSQSHMWR. A helical membrane pass occupies residues 236 to 256; the sequence is WESGVLGCCFLIFLLTTKYIS. The Cytoplasmic segment spans residues 257 to 262; that stretch reads KKRPKL. The helical transmembrane segment at 263–283 threads the bilayer; that stretch reads FWISAMSPLVSVIFGTIFLYF. The Extracellular portion of the chain corresponds to 284–315; that stretch reads LHDQFHGIQFIGELKKGINPPSITHLVFTPPY. Residues 316 to 336 form a helical membrane-spanning segment; that stretch reads VMLALKVGIITGVIALAEGIA. Topologically, residues 337–354 are cytoplasmic; the sequence is VGRSFAMYKNYNIDGNKE. A helical transmembrane segment spans residues 355–375; the sequence is MIAFGMMNILGSFSSCYLTTG. Residues 376-390 are Extracellular-facing; the sequence is PFSRSAVNYNAGCKT. 2 helical membrane-spanning segments follow: residues 391-411 and 412-432; these read ALSNVVMAVAVAVTLLFLTPL and FFYTPLVVLSSIIIAAMLGLV. Residues 433–447 lie on the Extracellular side of the membrane; that stretch reads DYEAAIHLWKLDKFD. A helical transmembrane segment spans residues 448 to 468; it reads FFVCLSAYLGVVFGTIEIGLI. The Cytoplasmic portion of the chain corresponds to 469 to 646; it reads LSVGISVMRL…DSPVPEFNNV (178 aa). Residues 504–627 enclose the STAS domain; the sequence is HYPQAITRSS…LTVAEAVAAC (124 aa).

Belongs to the SLC26A/SulP transporter (TC 2.A.53) family. Expressed only in leaves.

The protein resides in the membrane. Its function is as follows. H(+)/sulfate cotransporter that may play a role in the regulation of sulfate assimilation. The chain is Sulfate transporter 3.2 (SULTR3;2) from Arabidopsis thaliana (Mouse-ear cress).